The sequence spans 354 residues: MSKVKSITRESWILSTFPEWGSWLNEEIEQEQVAPGTFAMWWLGCTGIWLKSEGGTNVCVDFWCGTGKQSHGNPLMKQGHQMQRMAGVKKLQPNLRTTPFVLDPFAIRQIDAVLATHDHNDHIDVNVAAAVMQNCADDVPFIGPKTCVDLWIGWGVPKERCIVVKPGDVVKVKDIEIHALDAFDRTALITLPADQKAAGVLPDGMDDRAVNYLFKTPGGTLYHSGDSHYSNYYAKHGNEHQIDVALGSYGENPRGITDKMTSADILRMGEALNAKVVIPFHHDIWSNFQADPQEIRVLWEMKKDRLKYGFKPFIWQVGGKFTWPLDKDNFEYHYPRGFDDCFTIEPDLPFKSFL.

This sequence belongs to the UlaG family. The cofactor is a divalent metal cation.

The protein resides in the cytoplasm. The enzyme catalyses L-ascorbate 6-phosphate + H2O = 3-dehydro-L-gulonate 6-phosphate. The protein operates within cofactor degradation; L-ascorbate degradation; D-xylulose 5-phosphate from L-ascorbate: step 1/4. In terms of biological role, probably catalyzes the hydrolysis of L-ascorbate-6-P into 3-keto-L-gulonate-6-P. Is essential for L-ascorbate utilization under anaerobic conditions. The protein is Probable L-ascorbate-6-phosphate lactonase UlaG of Escherichia coli (strain SMS-3-5 / SECEC).